The sequence spans 60 residues: Small ribosomal subunit protein uS10 (60 aa).

Belongs to the universal ribosomal protein uS10 family.

The chain is Small ribosomal subunit protein uS10 (RPS20) from Zea mays (Maize).